The chain runs to 259 residues: UPF0246 protein VFMJ11_2214 (259 aa).

Belongs to the UPF0246 family.

This is UPF0246 protein VFMJ11_2214 from Aliivibrio fischeri (strain MJ11) (Vibrio fischeri).